The sequence spans 624 residues: Outer dynein arm-docking complex subunit 4 (624 aa).

TPR repeat units follow at residues 11–44, 46–78, 79–112, 273–309, 318–351, 358–391, 395–428, and 435–468; these read FPSY…QSGD, NCLV…DPTF, CKGI…RPDR, LKSL…NQEE, GNLY…AKEH, SRAL…AKTT, TWLF…AEEE, and LNAS…AKLV. Positions 511-624 are disordered; that stretch reads MSQMDLQGAS…VQKLEKTKEE (114 aa). Composition is skewed to basic and acidic residues over residues 520 to 557, 576 to 588, and 595 to 624; these read SEKE…DRKS, IRRE…RRLS, and PSED…TKEE.

Component of the outer dynein arm-docking complex along with ODAD1, ODAD2, and ODAD3. Interacts with ODAD1; this interaction may facilitate the recruitment and/or attachment of outer dynein arm docking complex proteins, including ODAD1, ODAD3 and ODAD2, to ciliary axonemes. Interacts with components of the IFT complex A, including IFT140, TTC21B/IFT139 and WDR19/IFT144, and the IFT complex B, including IFT46, IFT52 and IFT57. Interacts with CFAP53.

Its subcellular location is the cell projection. It localises to the cilium. The protein resides in the cytoplasm. It is found in the cytoskeleton. The protein localises to the cilium axoneme. Functionally, component of the outer dynein arm-docking complex (ODA-DC) that mediates outer dynein arms (ODA) binding onto the doublet microtubule. Plays an essential role for the assembly of ODA-DC and for the docking of ODA in ciliary axoneme. The protein is Outer dynein arm-docking complex subunit 4 (Odad4) of Mus musculus (Mouse).